The following is a 195-amino-acid chain: U8 snoRNA-decapping enzyme (195 aa).

The Nudix hydrolase domain maps to 18–168 (GWRHACHALL…LENTFIGNAR (151 aa)). Substrate-binding residues include H24, R50, and F57. Positions 59, 76, 80, and 99 each coordinate Mn(2+). The Nudix box signature appears at 61–82 (FVDLRDGSLEDGLNRELGEELG). Substrate-binding residues include N166 and Q170. E173 contributes to the Mn(2+) binding site.

This sequence belongs to the Nudix hydrolase family. NUDT16 subfamily. In terms of assembly, homodimer. Requires Mg(2+) as cofactor. It depends on Mn(2+) as a cofactor. Co(2+) serves as cofactor.

Its subcellular location is the nucleus. The protein localises to the nucleolus. The protein resides in the nucleoplasm. It is found in the cytoplasm. The catalysed reaction is a 5'-end (N(7)-methyl 5'-triphosphoguanosine)-ribonucleoside in mRNA + H2O = N(7)-methyl-GDP + a 5'-end phospho-ribonucleoside in mRNA + 2 H(+). It catalyses the reaction IDP + H2O = IMP + phosphate + H(+). The enzyme catalyses dIDP + H2O = dIMP + phosphate + H(+). It carries out the reaction a 5'-end NAD(+)-phospho-ribonucleoside in mRNA + H2O = a 5'-end phospho-ribonucleoside in mRNA + NAD(+) + H(+). The catalysed reaction is a 5'-end FAD-phospho-ribonucleoside in mRNA + H2O = a 5'-end phospho-adenosine-phospho-ribonucleoside in mRNA + FMN + 2 H(+). It catalyses the reaction a 5'-end CoA-ribonucleoside in mRNA + H2O = a 5'-end phospho-adenosine-phospho-ribonucleoside in mRNA + (R)-4'-phosphopantetheine + 2 H(+). RNA-binding and decapping enzyme that catalyzes the cleavage of the cap structure of snoRNAs and mRNAs in a metal-dependent manner. Part of the U8 snoRNP complex that is required for the accumulation of mature 5.8S and 28S rRNA. Has diphosphatase activity and removes m7G and/or m227G caps from U8 snoRNA and leaves a 5'monophosphate on the RNA. Also catalyzes the cleavage of the cap structure on mRNAs. Does not hydrolyze cap analog structures like 7-methylguanosine nucleoside triphosphate (m7GpppG). Also hydrolysis m7G- and m227G U3-capped RNAs but with less efficiencies. Has broad substrate specificity with manganese or cobalt as cofactor and can act on various RNA species. Binds to the U8 snoRNA; metal is not required for RNA-binding. May play a role in the regulation of snoRNAs and mRNAs degradation. Also acts as a phosphatase; hydrolyzes the non-canonical purine nucleotides inosine diphosphate (IDP) and deoxyinosine diphosphate (dITP) as well as guanosine diphosphate (GDP), deoxyguanosine diphosphate (dGDP), xanthine diphosphate (XDP), inosine triphosphate (ITP) and deoxyinosine triphosphate (ITP) to their respective monophosphate derivatives and does not distinguish between the deoxy- and ribose forms. The order of activity with different substrates is IDP &gt; dIDP &gt;&gt; GDP = dGDP &gt; XDP = ITP = dITP. Binds strongly to GTP, ITP and XTP. Participates in the hydrolysis of dIDP/IDP and probably excludes non-canonical purines from RNA and DNA precursor pools, thus preventing their incorporation into RNA and DNA and avoiding chromosomal lesions. Exhibits decapping activity towards NAD-capped RNAs and FAD-capped RNAs. Exhibits decapping activity towards dpCoA-capped RNAs in vitro. This is U8 snoRNA-decapping enzyme (NUDT16) from Bos taurus (Bovine).